A 727-amino-acid polypeptide reads, in one-letter code: Tubulin polyglutamylase TTLL11 (727 aa).

Basic and acidic residues predominate over residues 1–12 (MRRSSPEKKPEA). The segment at 1–88 (MRRSSPEKKP…ARVVRRLPPA (88 aa)) is disordered. Positions 17–34 (DAAAAAAATAAATESLPA) are enriched in low complexity. Composition is skewed to basic and acidic residues over residues 49–63 (DPER…KDVG) and 72–81 (HAPEEGEARV). A TTL domain is found at 125-477 (PVTVDSSKAR…EVKVAVIRDT (353 aa)). ATP contacts are provided by residues lysine 246, 252–253 (QG), 279–282 (QEYI), and 292–294 (KFD). Residue glutamine 252 coordinates a protein. Arginine 318 provides a ligand contact to L-glutamate. ATP is bound at residue 340 to 341 (TN). 3 residues coordinate L-glutamate: tyrosine 342, serine 343, and lysine 362. Mg(2+) is bound by residues aspartate 425, glutamate 438, and asparagine 440. The interval 464–566 (LVDEEVKVAV…SICLKQVFPK (103 aa)) is c-MTBD region. Residue lysine 470 coordinates L-glutamate. Disordered stretches follow at residues 530-551 (KSFT…EPNP) and 694-727 (RPLQ…LSQS).

Belongs to the tubulin--tyrosine ligase family. Mg(2+) is required as a cofactor. As to expression, highly expressed in brain, kidney, liver, lung, muscle and testis. Expressed in heart, spleen and trachea. In the brain, expressed in ependymal cilia, cortex, corpus callosum and striatum.

Its subcellular location is the cytoplasm. It localises to the cytoskeleton. It is found in the cilium basal body. The enzyme catalyses L-glutamyl-[protein] + L-glutamate + ATP = gamma-L-glutamyl-L-glutamyl-[protein] + ADP + phosphate + H(+). The catalysed reaction is (L-glutamyl)(n)-gamma-L-glutamyl-L-glutamyl-[protein] + L-glutamate + ATP = (L-glutamyl)(n+1)-gamma-L-glutamyl-L-glutamyl-[protein] + ADP + phosphate + H(+). In terms of biological role, polyglutamylase which modifies tubulin, generating polyglutamate side chains of variable lengths on the gamma-carboxyl group of specific glutamate residues within the C-terminal tail of tubulin. Preferentially mediates ATP-dependent polyglutamate long side-chain elongation over the initiation step of the polyglutamylation reaction. Preferentially modifies the alpha-tubulin tail over a beta-tail. Required for CCSAP localization to both spindle and cilia microtubules. Promotes tubulin polyglutamylation which stimulates spastin/SPAST-mediated microtubule severing, thereby regulating microtubule functions. This chain is Tubulin polyglutamylase TTLL11, found in Mus musculus (Mouse).